We begin with the raw amino-acid sequence, 227 residues long: TMF-regulated nuclear protein 1 (227 aa).

2 disordered regions span residues 1 to 72 (MPGC…ELQR) and 200 to 227 (GRLR…SPQR). The span at 22-55 (SPPPPWDPMPSSQPPPPTPTLTPTPTPGQSPPLP) shows a compositional bias: pro residues.

Interacts with TMF1; may regulate TRNP1 proteasomal degradation. Ubiquitinated, leading to its degradation by the proteasome.

It localises to the nucleus. In terms of biological role, DNA-binding factor that regulates the expression of a subset of genes and plays a key role in tangential, radial, and lateral expansion of the brain neocortex. Regulates neural stem cells proliferation and the production of intermediate neural progenitors and basal radial glial cells affecting the process of cerebral cortex gyrification. May control the proliferation rate of cells by regulating their progression through key cell-cycle transition points. This Homo sapiens (Human) protein is TMF-regulated nuclear protein 1 (TRNP1).